The following is a 427-amino-acid chain: Adenylosuccinate synthetase (427 aa).

GTP contacts are provided by residues 12-18 (GDEGKGK) and 40-42 (GHT). Catalysis depends on D13, which acts as the Proton acceptor. Residues D13 and G40 each coordinate Mg(2+). IMP contacts are provided by residues 13–16 (DEGK), 38–41 (NAGH), T128, R142, Q223, T238, and R302. H41 functions as the Proton donor in the catalytic mechanism. Substrate is bound at residue 298 to 304 (TTTGRPR). Residues R304, 330 to 332 (SID), and 412 to 414 (SVG) each bind GTP.

The protein belongs to the adenylosuccinate synthetase family. As to quaternary structure, homodimer. It depends on Mg(2+) as a cofactor.

Its subcellular location is the cytoplasm. It catalyses the reaction IMP + L-aspartate + GTP = N(6)-(1,2-dicarboxyethyl)-AMP + GDP + phosphate + 2 H(+). It functions in the pathway purine metabolism; AMP biosynthesis via de novo pathway; AMP from IMP: step 1/2. Functionally, plays an important role in the de novo pathway of purine nucleotide biosynthesis. Catalyzes the first committed step in the biosynthesis of AMP from IMP. This Staphylococcus aureus (strain N315) protein is Adenylosuccinate synthetase.